Reading from the N-terminus, the 255-residue chain is Indole-3-glycerol phosphate synthase (255 aa).

The protein belongs to the TrpC family.

The catalysed reaction is 1-(2-carboxyphenylamino)-1-deoxy-D-ribulose 5-phosphate + H(+) = (1S,2R)-1-C-(indol-3-yl)glycerol 3-phosphate + CO2 + H2O. It participates in amino-acid biosynthesis; L-tryptophan biosynthesis; L-tryptophan from chorismate: step 4/5. The chain is Indole-3-glycerol phosphate synthase from Streptococcus gordonii (strain Challis / ATCC 35105 / BCRC 15272 / CH1 / DL1 / V288).